Reading from the N-terminus, the 292-residue chain is Small ribosomal subunit protein uS5 (292 aa).

The segment at 1–56 is disordered; it reads MADDAGAAGGPGGPGGPGMGGRGGFRGGFGSGIRGRGRGRGRGRGRGRGARGGKAE. N-acetylalanine is present on A2. A compositionally biased stretch (gly residues) spans 7–34; that stretch reads AAGGPGGPGGPGMGGRGGFRGGFGSGIR. A compositionally biased stretch (basic residues) spans 35-51; it reads GRGRGRGRGRGRGRGAR. Glycyl lysine isopeptide (Lys-Gly) (interchain with G-Cter in ubiquitin) cross-links involve residues K54 and K58. The 64-residue stretch at 102-165 folds into the S5 DRBM domain; that stretch reads LKDEVLKIMP…ILAKLSIVPV (64 aa). T251 bears the Phosphothreonine mark. Position 262 is an N6-acetyllysine (K262). S263 is modified (phosphoserine). Residue T269 is modified to Phosphothreonine. The residue at position 274 (K274) is an N6-acetyllysine; alternate. A Glycyl lysine isopeptide (Lys-Gly) (interchain with G-Cter in SUMO1); alternate cross-link involves residue K274. A Glycyl lysine isopeptide (Lys-Gly) (interchain with G-Cter in SUMO2); alternate cross-link involves residue K274. Residue K274 forms a Glycyl lysine isopeptide (Lys-Gly) (interchain with G-Cter in ubiquitin); alternate linkage. Position 280 is a phosphoserine (S280).

This sequence belongs to the universal ribosomal protein uS5 family. As to quaternary structure, component of the small ribosomal subunit. Interacts with zinc finger protein ZNF277 (via zinc-finger domains); the interaction is direct; the interaction is extra-ribosomal. Interaction with ZNF277 competes with the binding of RPS2 to protein arginine methyltransferase PRMT3. In terms of processing, citrullinated by PADI4 in the Arg/Gly-rich region. Asymmetric arginine dimethylation by PRMT3 occurs at multiple sites in the Arg/Gly-rich region. Post-translationally, monoubiquitinated at Lys-54 and Lys-58 by RNF10 when a ribosome has stalled during translation, leading to its degradation by the proteasome. Deubiquitinated at Lys-54 and Lys-58 by USP10, preventing degradation by the proteasome and promoting 40S ribosome subunit recycling following ribosome dissociation.

Its subcellular location is the cytoplasm. It is found in the nucleus. The protein localises to the nucleolus. Its function is as follows. Component of the ribosome, a large ribonucleoprotein complex responsible for the synthesis of proteins in the cell. The small ribosomal subunit (SSU) binds messenger RNAs (mRNAs) and translates the encoded message by selecting cognate aminoacyl-transfer RNA (tRNA) molecules. The large subunit (LSU) contains the ribosomal catalytic site termed the peptidyl transferase center (PTC), which catalyzes the formation of peptide bonds, thereby polymerizing the amino acids delivered by tRNAs into a polypeptide chain. The nascent polypeptides leave the ribosome through a tunnel in the LSU and interact with protein factors that function in enzymatic processing, targeting, and the membrane insertion of nascent chains at the exit of the ribosomal tunnel. Plays a role in the assembly and function of the 40S ribosomal subunit. The polypeptide is Small ribosomal subunit protein uS5 (RPS2) (Oryctolagus cuniculus (Rabbit)).